A 611-amino-acid chain; its full sequence is Growth hormone receptor (611 aa).

A signal peptide spans Met-1–Ser-20. Asn-16 carries an N-linked (GlcNAc...) asparagine glycan. Residues Ala-21–Glu-240 are Extracellular-facing. Residues Cys-34 and Cys-44 are joined by a disulfide bond. Residue Asn-53 is glycosylated (N-linked (GlcNAc...) asparagine). An intrachain disulfide couples Cys-75 to Cys-86. Residue Asn-89 is glycosylated (N-linked (GlcNAc...) asparagine). Cys-100 and Cys-114 are joined by a disulfide. One can recognise a Fibronectin type-III domain in the interval Pro-125 to Ala-228. Residues Asn-130, Asn-135, and Asn-174 are each glycosylated (N-linked (GlcNAc...) asparagine). Positions Phe-214 to Ser-218 match the WSXWS motif motif. A helical transmembrane segment spans residues Phe-241–Ser-264. Over Lys-265–Pro-611 the chain is Cytoplasmic. Positions Lys-270–Ala-355 are required for JAK2 binding. The Box 1 motif motif lies at Ile-273–Lys-281. Positions Asp-316 to Asp-325 match the UbE motif motif. Positions Ser-411–Asn-455 are disordered. Positions Ser-414–Gln-433 are enriched in polar residues.

The protein belongs to the type I cytokine receptor family. Type 1 subfamily. Post-translationally, the soluble form (GHBP) is produced by phorbol ester-promoted proteolytic cleavage at the cell surface (shedding) by ADAM17/TACE.

The protein resides in the cell membrane. It is found in the secreted. Functionally, receptor for pituitary gland growth hormone (GH1) involved in regulating postnatal body growth. On ligand binding, couples to the JAK2/STAT5 pathway. Its function is as follows. The soluble form (GHBP) acts as a reservoir of growth hormone in plasma and may be a modulator/inhibitor of GH signaling. The sequence is that of Growth hormone receptor (GHR) from Columba livia (Rock dove).